We begin with the raw amino-acid sequence, 495 residues long: Two-component response regulator-like APRR3 (495 aa).

Residues 65 to 183 form the Response regulatory domain; sequence KVLLVENDDS…ELKNLWQHVW (119 aa). Disordered stretches follow at residues 188-441 and 465-495; these read SSSG…RWAQ and HSRKKLAEQRPHVKGQFIRKRDDHKSGSEDN. Over residues 206-217 the composition is skewed to polar residues; that stretch reads PESTQGSENDAS. The span at 231 to 248 shows a compositional bias: low complexity; the sequence is GLSNQDGGSDNGSGTQSS. The segment covering 256-265 has biased composition (polar residues); it reads TKSTSPSNQF. Positions 284 to 293 are enriched in basic and acidic residues; that stretch reads RLKEAEDQKE. Residues 294-304 are compositionally biased toward polar residues; it reads QIGTGSQTGMS. Positions 307–319 are enriched in basic and acidic residues; sequence KKAEEPGDLEKNA. Residues 335–350 are compositionally biased toward polar residues; sequence NRSSGNSQVESKAPSS. Residues 349 to 372 are a coiled coil; that stretch reads SSNREDLQSLEQTLKKTREDRDYK. Residues 351 to 378 show a composition bias toward basic and acidic residues; that stretch reads NREDLQSLEQTLKKTREDRDYKVGDRSV. 2 stretches are compositionally biased toward polar residues: residues 380-395 and 420-436; these read RHSNLSAFSKYNNGAT and GSSSSSDNPLKQQSSGS. The CCT domain occupies 442–484; that stretch reads REAALMKFRLKRKERCFEKKVRYHSRKKLAEQRPHVKGQFIRK. The span at 483-495 shows a compositional bias: basic and acidic residues; sequence RKRDDHKSGSEDN.

This sequence belongs to the ARR-like family. Interacts with APRR1/TOC1 (via N-terminus). Post-translationally, phosphorylated by WNK1; during the night. Phosphorylation is required for optimal interaction with APRR1/TOC1.

The protein resides in the nucleus. Its function is as follows. Controls photoperiodic flowering response. Component of the circadian clock. Controls the degradation of APRR1/TOC1 by the SCF(ZTL) complex. Expression of several members of the ARR-like family is controlled by circadian rhythm. The particular coordinated sequential expression of APRR9, APRR7, APRR5, APRR3 and APPR1 result to circadian waves that may be at the basis of the endogenous circadian clock. The chain is Two-component response regulator-like APRR3 (APRR3) from Arabidopsis thaliana (Mouse-ear cress).